Reading from the N-terminus, the 54-residue chain is Defensin-like protein 1 (54 aa).

4 cysteine pairs are disulfide-bonded: cysteine 6–cysteine 54, cysteine 17–cysteine 39, cysteine 23–cysteine 48, and cysteine 27–cysteine 50.

This sequence belongs to the DEFL family.

It is found in the secreted. In terms of biological role, possesses antifungal activity insensitive to inorganic cations. Causes germ tubes and hyphae to swell and form multiple hyphal buds. Binds to the plasma membrane of the fungus. Has no inhibitory effect on insect gut alpha-amylase. In Heuchera sanguinea (Coralbells), this protein is Defensin-like protein 1.